Reading from the N-terminus, the 80-residue chain is Small ribosomal subunit protein bS18 (80 aa).

This sequence belongs to the bacterial ribosomal protein bS18 family. Part of the 30S ribosomal subunit. Forms a tight heterodimer with protein bS6.

In terms of biological role, binds as a heterodimer with protein bS6 to the central domain of the 16S rRNA, where it helps stabilize the platform of the 30S subunit. The chain is Small ribosomal subunit protein bS18 from Staphylococcus epidermidis (strain ATCC 35984 / DSM 28319 / BCRC 17069 / CCUG 31568 / BM 3577 / RP62A).